Consider the following 561-residue polypeptide: Proline--tRNA ligase (561 aa).

Belongs to the class-II aminoacyl-tRNA synthetase family. ProS type 1 subfamily. Homodimer.

It localises to the cytoplasm. It carries out the reaction tRNA(Pro) + L-proline + ATP = L-prolyl-tRNA(Pro) + AMP + diphosphate. Functionally, catalyzes the attachment of proline to tRNA(Pro) in a two-step reaction: proline is first activated by ATP to form Pro-AMP and then transferred to the acceptor end of tRNA(Pro). As ProRS can inadvertently accommodate and process non-cognate amino acids such as alanine and cysteine, to avoid such errors it has two additional distinct editing activities against alanine. One activity is designated as 'pretransfer' editing and involves the tRNA(Pro)-independent hydrolysis of activated Ala-AMP. The other activity is designated 'posttransfer' editing and involves deacylation of mischarged Ala-tRNA(Pro). The misacylated Cys-tRNA(Pro) is not edited by ProRS. The sequence is that of Proline--tRNA ligase from Wigglesworthia glossinidia brevipalpis.